The following is a 127-amino-acid chain: Small ribosomal subunit protein eS8 (127 aa).

The protein belongs to the eukaryotic ribosomal protein eS8 family. In terms of assembly, part of the 30S ribosomal subunit.

This chain is Small ribosomal subunit protein eS8, found in Pyrococcus furiosus (strain ATCC 43587 / DSM 3638 / JCM 8422 / Vc1).